A 476-amino-acid chain; its full sequence is Viral inhibitor of caspase-8-induced apoptosis (476 aa).

This sequence belongs to the herpesviridae US22 family. In terms of assembly, interacts with host pro-caspase-8/CASP8; this interaction inhibits CASP8 activation.

Its function is as follows. Plays a role in the inhibition of apoptosis by interacting with the pro-domain of pro-caspase-8/CASP8 and thus preventing its activation. In Human cytomegalovirus (strain Merlin) (HHV-5), this protein is Viral inhibitor of caspase-8-induced apoptosis (UL36).